Consider the following 233-residue polypeptide: Small ribosomal subunit protein uS2c (233 aa).

It belongs to the universal ribosomal protein uS2 family.

Its subcellular location is the plastid. It localises to the cyanelle. The polypeptide is Small ribosomal subunit protein uS2c (rps2) (Cyanophora paradoxa).